The sequence spans 1657 residues: MDSKKRSSTEAEGSKERGLVHIWQAGSFPITPERLPGWGGKTVLQAALGVKHGVLLTEDGEVYSFGTLPWRSGPVEICPSSPILENALVGQYVVTVATGSFHSGAVTDNGVAYMWGENSAGQCAVANQQYVPEPNPVSIADSEASPLLAVRILQLACGEEHTLALSISREIWAWGTGCQLGLITTAFPVTKPQKVEHLAGRVVLQVACGAFHSLALVQCLPSQDLKPVPERCNQCSQLLITMTDKEDHVIISDSHCCPLGVTLTESQAENHASTALSPSTETLDRQEEVFENTLVANDQSVATELNAVSAQITSSDAMSSQQNVMGTTEISSARNIPSYPDTQAVNEYLRKLSDHSVREDSEHGEKPMPSQPLLEEAIPNLHSPPTTSTSALNSLVVSCASAVGVRVAATYEAGALSLKKVMNFYSTTPCETGAQAGSSAIGPEGLKDSREEQVKQESMQGKKSSSLVDIREEETEGGSRRLSLPGLLSQVSPRLLRKAARVKTRTVVLTPTYSGEADALLPSLRTEVWTWGKGKEGQLGHGDVLPRLQPLCVKCLDGKEVIHLEAGGYHSLALTAKSQVYSWGSNTFGQLGHSDFPTTVPRLAKISSENGVWSVAAGRDYSLFLVDTEDFQPGLYYSGRQDPTEGDNLPENHSGSKTPVLLSCSKLGYISRVTAGKDSYLALVDKNIMGYIASLHELATTERRFYSKLSDIKSQILRPLLSLENLGTTTTVQLLQEVASRFSKLCYLIGQHGASLSSFLHGVKEARSLVILKHSSLFLDSYTEYCTSITNFLVMGGFQLLAKPAIDFLNKNQELLQDLSEVNDENTQLMEILNTLFFLPIRRLHNYAKVLLKLATCFEVASPEYQKLQDSSSCYECLALHLGRKRKEAEYTLGFWKTFPGKMTDSLRKPERRLLCESSNRALSLQHAGRFSVNWFILFNDALVHAQFSTHHVFPLATLWAEPLSEEAGGVNGLKITTPEEQFTLISSTPQEKTKWLRAISQAVDQALRGMSDLPPYGSGSSVQRQEPPISRSAKYTFYKDPRLKDATYDGRWLSGKPHGRGVLKWPDGKMYSGMFRNGLEDGYGEYRIPNKAMNKEDHYVGHWKEGKMCGQGVYSYASGEVFEGCFQDNMRHGHGLLRSGKLTSSSPSMFIGQWVMDKKAGYGVFDDITRGEKYMGMWQDDVCQGNGVVVTQFGLYYEGNFHLNKMMGNGVLLSEDDTIYEGEFSDDWTLSGKGTLTMPNGDYIEGYFSGEWGSGIKITGTYFKPSLYESDKDRPKVFRKLRNLAVPADEKWKAVFDECWRQLGCEGPGQGEVWKAWDNIAVALTTSRRQHRDSPEILSRSQTQTLESLEFIPQHVGAFSVEKYDDIRKYLIKACDTPLHPLGRLVETLVAVYRMTYVGVGANRRLLQEAVKEIKSYLKRIFQLVRFLFPELPEEGSTIPLSAPLPTERKSFCTGKSDSRSESPEPGYVVTSSGLLLPVLLPRLYPPLFMLYALDNDREEDIYWECVLRLNKQPDIALLGFLGVQRKFWPATLSILGESKKVLPTTKDACFASAVECLQQISTTFTPSDKLKVIQQTFEEISQSVLASLHEDFLWSMDDLFPVFLYVVLRARIRNLGSEVHLIEDLMDPYLQHGEQGIMFTTLKACYYQIQREKLN.

RCC1 repeat units follow at residues 60–109, 110–168, and 169–219; these read GEVY…VTDN, GVAY…LSIS, and REIW…LVQC. The segment at 432–481 is disordered; that stretch reads TGAQAGSSAIGPEGLKDSREEQVKQESMQGKKSSSLVDIREEETEGGSRR. Positions 445-455 are enriched in basic and acidic residues; that stretch reads GLKDSREEQVK. Over residues 456–467 the composition is skewed to polar residues; that stretch reads QESMQGKKSSSL. 4 positions are modified to phosphoserine: S465, S466, S483, and S492. The residue at position 510 (T510) is a Phosphothreonine. RCC1 repeat units follow at residues 526 to 577 and 578 to 628; these read TEVW…LTAK and SQVY…LVDT. N6-acetyllysine is present on K533. The 196-residue stretch at 690 to 885 folds into the DH domain; sequence GYIASLHELA…ECLALHLGRK (196 aa). The PH domain occupies 901 to 1007; it reads GKMTDSLRKP…RAISQAVDQA (107 aa). MORN repeat units follow at residues 1049–1071, 1072–1094, 1100–1122, 1123–1145, 1151–1173, 1175–1197, 1198–1220, and 1221–1244; these read YDGRWLSGKPHGRGVLKWPDGKM, YSGMFRNGLEDGYGEYRIPNKAM, YVGHWKEGKMCGQGVYSYASGEV, FEGCFQDNMRHGHGLLRSGKLTS, FIGQWVMDKKAGYGVFDDITRGE, YMGMWQDDVCQGNGVVVTQFGLY, YEGNFHLNKMMGNGVLLSEDDTI, and YEGEFSDDWTLSGKGTLTMPNGDY. S1335 bears the Phosphoserine mark. The 145-residue stretch at 1513–1657 folds into the VPS9 domain; that stretch reads KQPDIALLGF…YYQIQREKLN (145 aa).

Forms a heteromeric complex with ALS2CL. Interacts with ALS2CL.

May act as a GTPase regulator. Controls survival and growth of spinal motoneurons. The chain is Alsin (ALS2) from Pan troglodytes (Chimpanzee).